Reading from the N-terminus, the 162-residue chain is Cytochrome c-type biogenesis protein CcmE (162 aa).

The Cytoplasmic portion of the chain corresponds to 1–8; the sequence is MNPRRKKR. A helical; Signal-anchor for type II membrane protein membrane pass occupies residues 9 to 29; it reads LTLAVALIGGVAAIASLLLYA. Residues 30–162 are Periplasmic-facing; the sequence is LNSNLNLFYT…YSQQKAPDTK (133 aa). The heme site is built by histidine 131 and tyrosine 135. Positions 139–162 are disordered; it reads EVAEAMGQKHEKLDYSQQKAPDTK. Over residues 153–162 the composition is skewed to polar residues; the sequence is YSQQKAPDTK.

This sequence belongs to the CcmE/CycJ family.

It localises to the cell inner membrane. Its function is as follows. Heme chaperone required for the biogenesis of c-type cytochromes. Transiently binds heme delivered by CcmC and transfers the heme to apo-cytochromes in a process facilitated by CcmF and CcmH. This Shewanella putrefaciens (strain CN-32 / ATCC BAA-453) protein is Cytochrome c-type biogenesis protein CcmE.